The chain runs to 203 residues: Large ribosomal subunit protein uL18 (203 aa).

It belongs to the universal ribosomal protein uL18 family. As to quaternary structure, part of the 50S ribosomal subunit. Contacts the 5S and 23S rRNAs.

Its function is as follows. This is one of the proteins that bind and probably mediate the attachment of the 5S RNA into the large ribosomal subunit, where it forms part of the central protuberance. In Pyrococcus horikoshii (strain ATCC 700860 / DSM 12428 / JCM 9974 / NBRC 100139 / OT-3), this protein is Large ribosomal subunit protein uL18.